A 108-amino-acid polypeptide reads, in one-letter code: UPF0145 protein HDEF_1024 (108 aa).

This sequence belongs to the UPF0145 family.

This chain is UPF0145 protein HDEF_1024, found in Hamiltonella defensa subsp. Acyrthosiphon pisum (strain 5AT).